The chain runs to 225 residues: MIEYLNVHGNPNIGVYIYANNKIALVPPTLTEKDKKKIEETLGVEVIETKIADMIINGVMIAGNDNGLLLPRIVKPEELDYLREHIGDKVRLEILEVRQTALGNLIAANNRGALVSPLIDKAILDKIKSVLGVETIYQRHLANIPTVGSMIVVTNRGGVVHPGVSDDEIRILNSVFGVEFTTATVNFGLYFVKAGLVANDHGALVGDETTGPELMRIQQALRLRG.

The protein belongs to the eIF-6 family.

Functionally, binds to the 50S ribosomal subunit and prevents its association with the 30S ribosomal subunit to form the 70S initiation complex. The protein is Translation initiation factor 6 of Hyperthermus butylicus (strain DSM 5456 / JCM 9403 / PLM1-5).